The sequence spans 1047 residues: Isoleucine--tRNA ligase (1047 aa).

The 'HIGH' region signature appears at 52 to 62; it reads PTANGMPGAHH. Residues 600–604 carry the 'KMSKS' region motif; that stretch reads KMSKH. Position 603 (Lys-603) interacts with ATP.

It belongs to the class-I aminoacyl-tRNA synthetase family. IleS type 2 subfamily. Monomer. It depends on Zn(2+) as a cofactor.

Its subcellular location is the cytoplasm. It catalyses the reaction tRNA(Ile) + L-isoleucine + ATP = L-isoleucyl-tRNA(Ile) + AMP + diphosphate. Functionally, catalyzes the attachment of isoleucine to tRNA(Ile). As IleRS can inadvertently accommodate and process structurally similar amino acids such as valine, to avoid such errors it has two additional distinct tRNA(Ile)-dependent editing activities. One activity is designated as 'pretransfer' editing and involves the hydrolysis of activated Val-AMP. The other activity is designated 'posttransfer' editing and involves deacylation of mischarged Val-tRNA(Ile). This Streptomyces avermitilis (strain ATCC 31267 / DSM 46492 / JCM 5070 / NBRC 14893 / NCIMB 12804 / NRRL 8165 / MA-4680) protein is Isoleucine--tRNA ligase.